Consider the following 468-residue polypeptide: Citrate synthase, mitochondrial (468 aa).

The N-terminal 30 residues, 1-30 (MSLISAGRVCARILGAKNSPCALIAARQAS), are a transit peptide targeting the mitochondrion. Residues H303 and H349 contribute to the active site. Position 358 (R358) interacts with oxaloacetate. The active site involves D404. 2 residues coordinate oxaloacetate: R430 and R450.

Belongs to the citrate synthase family. In terms of assembly, homodimer.

It is found in the mitochondrion matrix. It catalyses the reaction oxaloacetate + acetyl-CoA + H2O = citrate + CoA + H(+). Its pathway is carbohydrate metabolism; tricarboxylic acid cycle; isocitrate from oxaloacetate: step 1/2. Its function is as follows. Key enzyme of the Krebs tricarboxylic acid cycle which catalyzes the synthesis of citrate from acetyl coenzyme A and oxaloacetate. The chain is Citrate synthase, mitochondrial (cs) from Xenopus laevis (African clawed frog).